A 169-amino-acid chain; its full sequence is Putative phosphoesterase SACOL1020 (169 aa).

The active-site Proton donor is histidine 34. Short sequence motifs (HXTX) lie at residues histidine 34–isoleucine 37 and histidine 115–isoleucine 118. Catalysis depends on histidine 115, which acts as the Proton acceptor.

The protein belongs to the 2H phosphoesterase superfamily. YjcG family.

In Staphylococcus aureus (strain COL), this protein is Putative phosphoesterase SACOL1020.